The sequence spans 211 residues: Pyridoxine/pyridoxamine 5'-phosphate oxidase (211 aa).

Residues 7 to 10 and lysine 65 contribute to the substrate site; that span reads RRDY. FMN contacts are provided by residues 60 to 65, 75 to 76, arginine 81, lysine 82, and glutamine 104; these read RIVLLK and YT. Residues tyrosine 122, arginine 126, and serine 130 each coordinate substrate. Residues 139–140 and tryptophan 184 contribute to the FMN site; that span reads QS. Residue 190–192 participates in substrate binding; it reads RLH. Arginine 194 is a binding site for FMN.

Belongs to the pyridoxamine 5'-phosphate oxidase family. In terms of assembly, homodimer. FMN serves as cofactor.

It carries out the reaction pyridoxamine 5'-phosphate + O2 + H2O = pyridoxal 5'-phosphate + H2O2 + NH4(+). The catalysed reaction is pyridoxine 5'-phosphate + O2 = pyridoxal 5'-phosphate + H2O2. Its pathway is cofactor metabolism; pyridoxal 5'-phosphate salvage; pyridoxal 5'-phosphate from pyridoxamine 5'-phosphate: step 1/1. It functions in the pathway cofactor metabolism; pyridoxal 5'-phosphate salvage; pyridoxal 5'-phosphate from pyridoxine 5'-phosphate: step 1/1. Its function is as follows. Catalyzes the oxidation of either pyridoxine 5'-phosphate (PNP) or pyridoxamine 5'-phosphate (PMP) into pyridoxal 5'-phosphate (PLP). This chain is Pyridoxine/pyridoxamine 5'-phosphate oxidase, found in Aliivibrio fischeri (strain ATCC 700601 / ES114) (Vibrio fischeri).